Here is a 577-residue protein sequence, read N- to C-terminus: Protein NRT1/ PTR FAMILY 6.2 (577 aa).

Transmembrane regions (helical) follow at residues 28 to 48 (WITAALILGIEVVERLSTMGI), 74 to 94 (FMGTSFLLCLLGGFLADSFLG), 96 to 116 (FKTIGIFSTIQALGTGALAVA), 134 to 154 (IPATAFQMTILYVSLYLIALG), 183 to 203 (FFFNRFFFFISMGTLLAVTVL), 214 to 234 (WAYGICTVSMAIAIVIFLCGT), 332 to 352 (LLPIWATTIIFWTTYAQMITF), 369 to 389 (IPAGSLTVFFVAAILITLAVY), 409 to 429 (LQRIAIGLVLSTAGMAAAALV), 447 to 467 (ISVFLLVPQFFLVGAGEAFIY), 488 to 508 (GLFLTTLSLGFFVSSFLVSIV), and 535 to 555 (WLLVILSGINFVVYIICALWF).

Belongs to the major facilitator superfamily. Proton-dependent oligopeptide transporter (POT/PTR) (TC 2.A.17) family. Expressed in shoots, leaves, flowers and siliques. Expressed in leaf petiole.

Its subcellular location is the membrane. Functionally, low-affinity proton-dependent nitrate transporter. Not involved in dipeptides transport. The chain is Protein NRT1/ PTR FAMILY 6.2 (NPF6.2) from Arabidopsis thaliana (Mouse-ear cress).